A 315-amino-acid chain; its full sequence is Ribose-phosphate pyrophosphokinase (315 aa).

Residues 37–39 (DSE) and 96–97 (RQ) contribute to the ATP site. H131 and D170 together coordinate Mg(2+). The active site involves K194. D-ribose 5-phosphate-binding positions include R196, D220, and 224 to 228 (DTGGT).

It belongs to the ribose-phosphate pyrophosphokinase family. Class I subfamily. As to quaternary structure, homohexamer. It depends on Mg(2+) as a cofactor.

The protein localises to the cytoplasm. It catalyses the reaction D-ribose 5-phosphate + ATP = 5-phospho-alpha-D-ribose 1-diphosphate + AMP + H(+). The protein operates within metabolic intermediate biosynthesis; 5-phospho-alpha-D-ribose 1-diphosphate biosynthesis; 5-phospho-alpha-D-ribose 1-diphosphate from D-ribose 5-phosphate (route I): step 1/1. In terms of biological role, involved in the biosynthesis of the central metabolite phospho-alpha-D-ribosyl-1-pyrophosphate (PRPP) via the transfer of pyrophosphoryl group from ATP to 1-hydroxyl of ribose-5-phosphate (Rib-5-P). The polypeptide is Ribose-phosphate pyrophosphokinase (Marinomonas sp. (strain MWYL1)).